Consider the following 151-residue polypeptide: D-aminoacyl-tRNA deacylase (151 aa).

Positions 136–137 (GP) match the Gly-cisPro motif, important for rejection of L-amino acids motif.

Belongs to the DTD family. As to quaternary structure, homodimer.

The protein localises to the cytoplasm. It catalyses the reaction glycyl-tRNA(Ala) + H2O = tRNA(Ala) + glycine + H(+). The enzyme catalyses a D-aminoacyl-tRNA + H2O = a tRNA + a D-alpha-amino acid + H(+). An aminoacyl-tRNA editing enzyme that deacylates mischarged D-aminoacyl-tRNAs. Also deacylates mischarged glycyl-tRNA(Ala), protecting cells against glycine mischarging by AlaRS. Acts via tRNA-based rather than protein-based catalysis; rejects L-amino acids rather than detecting D-amino acids in the active site. By recycling D-aminoacyl-tRNA to D-amino acids and free tRNA molecules, this enzyme counteracts the toxicity associated with the formation of D-aminoacyl-tRNA entities in vivo and helps enforce protein L-homochirality. The polypeptide is D-aminoacyl-tRNA deacylase (Lactococcus lactis subsp. cremoris (strain SK11)).